The following is a 204-amino-acid chain: ADP-ribosylation factor-like protein 15 (204 aa).

GTP contacts are provided by residues 39–46, 82–86, and 142–145; these read GLTGSGKT, ELGGA, and NHQD.

The protein belongs to the small GTPase superfamily. Arf family.

This Homo sapiens (Human) protein is ADP-ribosylation factor-like protein 15 (ARL15).